The following is a 358-amino-acid chain: Protein-glutamate methylesterase/protein-glutamine glutaminase 2 (358 aa).

One can recognise a Response regulatory domain in the interval 7 to 124 (SVLLVDDSAV…KNFLIESAAE (118 aa)). Residue D58 is modified to 4-aspartylphosphate. Positions 170 to 358 (AQTTERIVAI…QEIHQAILHR (189 aa)) constitute a CheB-type methylesterase domain. Residues S182, H208, and D304 contribute to the active site.

Belongs to the CheB family. Post-translationally, phosphorylated by CheA. Phosphorylation of the N-terminal regulatory domain activates the methylesterase activity.

It localises to the cytoplasm. The enzyme catalyses [protein]-L-glutamate 5-O-methyl ester + H2O = L-glutamyl-[protein] + methanol + H(+). It catalyses the reaction L-glutaminyl-[protein] + H2O = L-glutamyl-[protein] + NH4(+). Its function is as follows. Involved in chemotaxis. Part of a chemotaxis signal transduction system that modulates chemotaxis in response to various stimuli. Catalyzes the demethylation of specific methylglutamate residues introduced into the chemoreceptors (methyl-accepting chemotaxis proteins or MCP) by CheR. Also mediates the irreversible deamidation of specific glutamine residues to glutamic acid. In Pseudomonas syringae pv. tomato (strain ATCC BAA-871 / DC3000), this protein is Protein-glutamate methylesterase/protein-glutamine glutaminase 2.